The chain runs to 344 residues: Probable electron transfer flavoprotein subunit alpha, mitochondrial (344 aa).

284–312 lines the FAD pocket; sequence LYIAIGVSGAVQHLAGMKDSKVIVAINND.

This sequence belongs to the ETF alpha-subunit/FixB family. In terms of assembly, heterodimer of an alpha and a beta subunit. FAD serves as cofactor.

Its subcellular location is the mitochondrion matrix. In terms of biological role, the electron transfer flavoprotein serves as a specific electron acceptor for several dehydrogenases, including five acyl-CoA dehydrogenases, glutaryl-CoA and sarcosine dehydrogenase. It transfers the electrons to the main mitochondrial respiratory chain via ETF-ubiquinone oxidoreductase (ETF dehydrogenase). This Saccharomyces cerevisiae (strain ATCC 204508 / S288c) (Baker's yeast) protein is Probable electron transfer flavoprotein subunit alpha, mitochondrial (AIM45).